The sequence spans 446 residues: tRNA modification GTPase MnmE (446 aa).

(6S)-5-formyl-5,6,7,8-tetrahydrofolate is bound by residues R22, E80, and K119. The TrmE-type G domain maps to 215-370 (GLSLVIAGRP…LKKVIKQVVG (156 aa)). Residue N225 coordinates K(+). GTP-binding positions include 225–230 (NAGKST), 244–250 (TEIAGTT), and 269–272 (DTAG). Residue S229 participates in Mg(2+) binding. Positions 244, 246, and 249 each coordinate K(+). T250 lines the Mg(2+) pocket. K446 is a binding site for (6S)-5-formyl-5,6,7,8-tetrahydrofolate.

The protein belongs to the TRAFAC class TrmE-Era-EngA-EngB-Septin-like GTPase superfamily. TrmE GTPase family. Homodimer. Heterotetramer of two MnmE and two MnmG subunits. K(+) is required as a cofactor.

It localises to the cytoplasm. Exhibits a very high intrinsic GTPase hydrolysis rate. Involved in the addition of a carboxymethylaminomethyl (cmnm) group at the wobble position (U34) of certain tRNAs, forming tRNA-cmnm(5)s(2)U34. This is tRNA modification GTPase MnmE from Legionella pneumophila (strain Corby).